Reading from the N-terminus, the 353-residue chain is Uroporphyrinogen decarboxylase (353 aa).

Substrate-binding positions include 26–30, aspartate 76, tyrosine 153, threonine 208, and histidine 326; that span reads RQAGR.

Belongs to the uroporphyrinogen decarboxylase family. In terms of assembly, homodimer.

It is found in the cytoplasm. It carries out the reaction uroporphyrinogen III + 4 H(+) = coproporphyrinogen III + 4 CO2. It functions in the pathway porphyrin-containing compound metabolism; protoporphyrin-IX biosynthesis; coproporphyrinogen-III from 5-aminolevulinate: step 4/4. Its function is as follows. Catalyzes the decarboxylation of four acetate groups of uroporphyrinogen-III to yield coproporphyrinogen-III. The polypeptide is Uroporphyrinogen decarboxylase (Chromohalobacter salexigens (strain ATCC BAA-138 / DSM 3043 / CIP 106854 / NCIMB 13768 / 1H11)).